The chain runs to 389 residues: Na(+)/H(+) antiporter NhaA 1 (389 aa).

11 helical membrane-spanning segments follow: residues 12 to 32 (VLNE…ALLV), 62 to 82 (FLLW…GLEL), 97 to 117 (IVLP…LFAL), 128 to 148 (GWAI…MMCG), 157 to 177 (IFLL…IAIF), 184 to 204 (IAAF…NLLG), 220 to 240 (ISVL…AFFI), 260 to 280 (FWIA…VNLS), 282 to 302 (IDIG…LFVG), 331 to 351 (LYGV…IDGL), and 365 to 385 (LAIL…LKFF).

This sequence belongs to the NhaA Na(+)/H(+) (TC 2.A.33) antiporter family.

It is found in the cell inner membrane. The enzyme catalyses Na(+)(in) + 2 H(+)(out) = Na(+)(out) + 2 H(+)(in). Na(+)/H(+) antiporter that extrudes sodium in exchange for external protons. The sequence is that of Na(+)/H(+) antiporter NhaA 1 from Campylobacter jejuni subsp. jejuni serotype O:2 (strain ATCC 700819 / NCTC 11168).